We begin with the raw amino-acid sequence, 498 residues long: Cytochrome c-552 (498 aa).

The N-terminal stretch at 1–31 (MKNKERKLKSWQGWLIFSSSMVVVFCLGLLA) is a signal peptide. His119 serves as a coordination point for heme c. Residues Cys148, Cys151, and Lys152 each contribute to the heme site. Positions 186, 189, 190, 228, 231, and 232 each coordinate heme c. Ca(2+) is bound by residues Glu234, Tyr235, Lys280, and Gln282. A substrate-binding site is contributed by Tyr235. His283 contacts substrate. Heme c-binding residues include His294, Cys301, Cys304, His305, His319, Cys332, Cys335, His336, and His411.

The protein belongs to the cytochrome c-552 family. The cofactor is Ca(2+). Heme c is required as a cofactor.

The protein localises to the periplasm. It carries out the reaction 6 Fe(III)-[cytochrome c] + NH4(+) + 2 H2O = 6 Fe(II)-[cytochrome c] + nitrite + 8 H(+). It participates in nitrogen metabolism; nitrate reduction (assimilation). In terms of biological role, catalyzes the reduction of nitrite to ammonia, consuming six electrons in the process. The sequence is that of Cytochrome c-552 from Porphyromonas gingivalis (strain ATCC BAA-308 / W83).